Consider the following 485-residue polypeptide: Ribulose bisphosphate carboxylase large chain (485 aa).

Asparagine 124 and threonine 174 together coordinate substrate. Lysine 176 serves as the catalytic Proton acceptor. Position 178 (lysine 178) interacts with substrate. Residues lysine 202, aspartate 204, and glutamate 205 each contribute to the Mg(2+) site. At lysine 202 the chain carries N6-carboxylysine. Residue histidine 294 is the Proton acceptor of the active site. The substrate site is built by arginine 295, histidine 327, and serine 379.

It belongs to the RuBisCO large chain family. Type I subfamily. Heterohexadecamer of 8 large chains and 8 small chains. Mg(2+) is required as a cofactor.

It carries out the reaction 2 (2R)-3-phosphoglycerate + 2 H(+) = D-ribulose 1,5-bisphosphate + CO2 + H2O. The catalysed reaction is D-ribulose 1,5-bisphosphate + O2 = 2-phosphoglycolate + (2R)-3-phosphoglycerate + 2 H(+). Functionally, ruBisCO catalyzes two reactions: the carboxylation of D-ribulose 1,5-bisphosphate, the primary event in carbon dioxide fixation, as well as the oxidative fragmentation of the pentose substrate in the photorespiration process. Both reactions occur simultaneously and in competition at the same active site. The sequence is that of Ribulose bisphosphate carboxylase large chain from Rhodopseudomonas palustris (strain BisB18).